A 186-amino-acid chain; its full sequence is Elongation factor P (186 aa).

The protein belongs to the elongation factor P family.

It localises to the cytoplasm. It participates in protein biosynthesis; polypeptide chain elongation. In terms of biological role, involved in peptide bond synthesis. Stimulates efficient translation and peptide-bond synthesis on native or reconstituted 70S ribosomes in vitro. Probably functions indirectly by altering the affinity of the ribosome for aminoacyl-tRNA, thus increasing their reactivity as acceptors for peptidyl transferase. The protein is Elongation factor P of Maridesulfovibrio salexigens (strain ATCC 14822 / DSM 2638 / NCIMB 8403 / VKM B-1763) (Desulfovibrio salexigens).